We begin with the raw amino-acid sequence, 57 residues long: Large ribosomal subunit protein eL37 (57 aa).

4 residues coordinate Zn(2+): Cys20, Cys23, Cys35, and Cys38. The C4-type zinc finger occupies 20-38; that stretch reads CRRCGEKSYHKQKKVCASC.

The protein belongs to the eukaryotic ribosomal protein eL37 family. Requires Zn(2+) as cofactor.

Its function is as follows. Binds to the 23S rRNA. The protein is Large ribosomal subunit protein eL37 of Natronomonas pharaonis (strain ATCC 35678 / DSM 2160 / CIP 103997 / JCM 8858 / NBRC 14720 / NCIMB 2260 / Gabara) (Halobacterium pharaonis).